The chain runs to 81 residues: Large ribosomal subunit protein bL31B (81 aa).

This sequence belongs to the bacterial ribosomal protein bL31 family. Type B subfamily. In terms of assembly, part of the 50S ribosomal subunit.

The protein is Large ribosomal subunit protein bL31B of Borreliella burgdorferi (strain ATCC 35210 / DSM 4680 / CIP 102532 / B31) (Borrelia burgdorferi).